Consider the following 299-residue polypeptide: Large ribosomal subunit protein uL18 (299 aa).

It belongs to the universal ribosomal protein uL18 family. Component of the large ribosomal subunit (LSU).

The protein resides in the cytoplasm. Its subcellular location is the nucleus. Functionally, component of the ribosome, a large ribonucleoprotein complex responsible for the synthesis of proteins in the cell. The small ribosomal subunit (SSU) binds messenger RNAs (mRNAs) and translates the encoded message by selecting cognate aminoacyl-transfer RNA (tRNA) molecules. The large subunit (LSU) contains the ribosomal catalytic site termed the peptidyl transferase center (PTC), which catalyzes the formation of peptide bonds, thereby polymerizing the amino acids delivered by tRNAs into a polypeptide chain. The nascent polypeptides leave the ribosome through a tunnel in the LSU and interact with protein factors that function in enzymatic processing, targeting, and the membrane insertion of nascent chains at the exit of the ribosomal tunnel. In Bombyx mori (Silk moth), this protein is Large ribosomal subunit protein uL18 (RpL5).